Here is a 334-residue protein sequence, read N- to C-terminus: Holliday junction branch migration complex subunit RuvB (334 aa).

The tract at residues Ala-4 to Tyr-186 is large ATPase domain (RuvB-L). Residues Ile-25, Arg-26, Gly-67, Lys-70, Thr-71, Thr-72, Glu-133–Tyr-135, Arg-176, Tyr-186, and Arg-223 each bind ATP. A Mg(2+)-binding site is contributed by Thr-71. The interval Lys-187–Asp-257 is small ATPAse domain (RuvB-S). Residues His-260–Lys-334 form a head domain (RuvB-H) region. Positions 315 and 320 each coordinate DNA.

This sequence belongs to the RuvB family. As to quaternary structure, homohexamer. Forms an RuvA(8)-RuvB(12)-Holliday junction (HJ) complex. HJ DNA is sandwiched between 2 RuvA tetramers; dsDNA enters through RuvA and exits via RuvB. An RuvB hexamer assembles on each DNA strand where it exits the tetramer. Each RuvB hexamer is contacted by two RuvA subunits (via domain III) on 2 adjacent RuvB subunits; this complex drives branch migration. In the full resolvosome a probable DNA-RuvA(4)-RuvB(12)-RuvC(2) complex forms which resolves the HJ.

The protein resides in the cytoplasm. It catalyses the reaction ATP + H2O = ADP + phosphate + H(+). In terms of biological role, the RuvA-RuvB-RuvC complex processes Holliday junction (HJ) DNA during genetic recombination and DNA repair, while the RuvA-RuvB complex plays an important role in the rescue of blocked DNA replication forks via replication fork reversal (RFR). RuvA specifically binds to HJ cruciform DNA, conferring on it an open structure. The RuvB hexamer acts as an ATP-dependent pump, pulling dsDNA into and through the RuvAB complex. RuvB forms 2 homohexamers on either side of HJ DNA bound by 1 or 2 RuvA tetramers; 4 subunits per hexamer contact DNA at a time. Coordinated motions by a converter formed by DNA-disengaged RuvB subunits stimulates ATP hydrolysis and nucleotide exchange. Immobilization of the converter enables RuvB to convert the ATP-contained energy into a lever motion, pulling 2 nucleotides of DNA out of the RuvA tetramer per ATP hydrolyzed, thus driving DNA branch migration. The RuvB motors rotate together with the DNA substrate, which together with the progressing nucleotide cycle form the mechanistic basis for DNA recombination by continuous HJ branch migration. Branch migration allows RuvC to scan DNA until it finds its consensus sequence, where it cleaves and resolves cruciform DNA. The sequence is that of Holliday junction branch migration complex subunit RuvB from Vibrio cholerae serotype O1 (strain ATCC 39315 / El Tor Inaba N16961).